A 349-amino-acid chain; its full sequence is Hepatic sodium/bile acid cotransporter (349 aa).

The Extracellular segment spans residues 1–22 (MEAHNASAPFNFTLPPNFGKRP). N-linked (GlcNAc...) asparagine glycans are attached at residues N5 and N11. Residues 23-44 (TDLALSVILVFMLFFIMLSLGC) form a helical membrane-spanning segment. Residues 45–47 (TME) are Cytoplasmic-facing. Residues 48-83 (FSKIKAHLWKPKGLAIALVAQYGIMPLTAFVLGKVF) form a helical membrane-spanning segment. The Extracellular segment spans residues 84-86 (RLK). The chain crosses the membrane as a discontinuously helical span at residues 87–112 (NIEALAILVCGCSPGGNLSNVFSLAM). The Cytoplasmic segment spans residues 113–115 (KGD). A helical transmembrane segment spans residues 116-142 (MNLSIVMTTCSTFCALGMMPLLLYIYS). The Extracellular portion of the chain corresponds to 143–156 (RGIYDGDLKDKVPY). Residues 157–179 (KGIVISLVLVLIPCTIGIVLKSK) traverse the membrane as a helical segment. At 180–183 (RPQY) the chain is on the cytoplasmic side. The chain crosses the membrane as a helical span at residues 184 to 217 (MRYVIKGGMIIILLCSVAVTVLSAINVGKSIMFA). Residues 218–219 (MT) are Extracellular-facing. A helical transmembrane segment spans residues 220–243 (PLLIATSSLMPFIGFLLGYVLSAL). The Cytoplasmic portion of the chain corresponds to 244–247 (FCLN). The chain crosses the membrane as a discontinuously helical span at residues 248-273 (GRCRRTVSMETGCQNVQLCSTILNVA). The Extracellular portion of the chain corresponds to 274–280 (FPPEVIG). A helical transmembrane segment spans residues 281–311 (PLFFFPLLYMIFQLGEGLLLIAIFWCYEKFK). Residues 312 to 349 (TPKDKTKMIYTAATTEETIPGALGNGTYKGEDCSPCTA) lie on the Cytoplasmic side of the membrane.

Belongs to the bile acid:sodium symporter (BASS) (TC 2.A.28) family. In terms of assembly, (Microbial infection) Interacts with the myristoylated pre-S1 domain of hepatitis B virus large envelope protein; myristoylation is essential for this interaction. Expressed in liver. Expressed in placental trophoblasts.

The protein localises to the cell membrane. It carries out the reaction taurocholate(out) + 2 Na(+)(out) = taurocholate(in) + 2 Na(+)(in). The catalysed reaction is cholate(out) + 2 Na(+)(out) = cholate(in) + 2 Na(+)(in). The enzyme catalyses estrone 3-sulfate(out) + 2 Na(+)(out) = estrone 3-sulfate(in) + 2 Na(+)(in). It catalyses the reaction taurochenodeoxycholate(out) + 2 Na(+)(out) = taurochenodeoxycholate(in) + 2 Na(+)(in). It carries out the reaction tauroursodeoxycholate(out) + 2 Na(+)(out) = tauroursodeoxycholate(in) + 2 Na(+)(in). The catalysed reaction is glycocholate(out) + 2 Na(+)(out) = glycocholate(in) + 2 Na(+)(in). The enzyme catalyses tauronorcholate(out) + 2 Na(+)(out) = tauronorcholate(in) + 2 Na(+)(in). It catalyses the reaction taurodeoxycholate(out) + 2 Na(+)(out) = taurodeoxycholate(in) + 2 Na(+)(in). It carries out the reaction tauroallocholate(out) + 2 Na(+)(out) = tauroallocholate(in) + 2 Na(+)(in). The catalysed reaction is taurohyodeoxycholate(out) + 2 Na(+)(out) = taurohyodeoxycholate(in) + 2 Na(+)(in). The enzyme catalyses taurohyocholate(out) + 2 Na(+)(out) = taurohyocholate(in) + 2 Na(+)(in). It catalyses the reaction tauro-beta-muricholate(out) + 2 Na(+)(out) = tauro-beta-muricholate(in) + 2 Na(+)(in). With respect to regulation, the transport of bile acids is sodium-dependent. In terms of biological role, as a major transporter of conjugated bile salts from plasma into the hepatocyte, it plays a key role in the enterohepatic circulation of bile salts necessary for the solubilization and absorption of dietary fat and fat-soluble vitamins. It is strictly dependent on the extracellular presence of sodium. It exhibits broad substrate specificity and transports various bile acids, such as taurocholate, cholate, as well as non-bile acid organic compounds, such as estrone sulfate. Works collaboratively with the ileal transporter (NTCP2), the organic solute transporter (OST), and the bile salt export pump (BSEP), to ensure efficacious biological recycling of bile acids during enterohepatic circulation. Functionally, (Microbial infection) Acts as an entry receptor for hepatitis B virus (HBV). The recognition for human SLC10A1/NTCP is highly specific. This is Hepatic sodium/bile acid cotransporter (SLC10A1) from Homo sapiens (Human).